A 348-amino-acid polypeptide reads, in one-letter code: Propane 2-monooxygenase, reductase component (348 aa).

A 2Fe-2S ferredoxin-type domain is found at 5-95; it reads HKINFDPVDI…DCTIELLNFD (91 aa). [2Fe-2S] cluster contacts are provided by cysteine 39, cysteine 44, cysteine 47, and cysteine 79. One can recognise an FAD-binding FR-type domain in the interval 105–206; it reads IQDVRTQVQA…TGPYGSFTLK (102 aa).

Belongs to the bacterial ring-hydroxylating dioxygenase ferredoxin reductase family. In terms of assembly, the propane 2-monooxygenase multicomponent enzyme system is composed of an electron transfer component and a monooxygenase component interacting with the effector protein MimD. The electron transfer component is composed of a reductase (MimB), and the monooxygenase component is formed by a large subunit (MimA) and a small subunit (MimC). The cofactor is FAD. [2Fe-2S] cluster serves as cofactor.

Its function is as follows. Reductase component of the propane 2-monooxygenase multicomponent enzyme system which is involved in the degradation of propane via the O2-dependent hydroxylation of propane. Reductase catalyzes the transfer of electrons from NADH or NADPH to monooxygenase. This is Propane 2-monooxygenase, reductase component from Mycolicibacterium smegmatis (strain ATCC 700084 / mc(2)155) (Mycobacterium smegmatis).